The sequence spans 106 residues: UPF0145 protein Dhaf_3855 (106 aa).

It belongs to the UPF0145 family.

The protein is UPF0145 protein Dhaf_3855 of Desulfitobacterium hafniense (strain DSM 10664 / DCB-2).